The sequence spans 670 residues: DNA ligase (670 aa).

Residues 33-37 (DAEYD), 82-83 (SL), and E114 each bind NAD(+). The N6-AMP-lysine intermediate role is filled by K116. Positions 137, 174, 291, and 315 each coordinate NAD(+). Residues C409, C412, C427, and C433 each contribute to the Zn(2+) site. Residues 593-670 (GVELPLEGKT…TEQDLLNLMK (78 aa)) form the BRCT domain.

This sequence belongs to the NAD-dependent DNA ligase family. LigA subfamily. The cofactor is Mg(2+). Mn(2+) is required as a cofactor.

It carries out the reaction NAD(+) + (deoxyribonucleotide)n-3'-hydroxyl + 5'-phospho-(deoxyribonucleotide)m = (deoxyribonucleotide)n+m + AMP + beta-nicotinamide D-nucleotide.. Its function is as follows. DNA ligase that catalyzes the formation of phosphodiester linkages between 5'-phosphoryl and 3'-hydroxyl groups in double-stranded DNA using NAD as a coenzyme and as the energy source for the reaction. It is essential for DNA replication and repair of damaged DNA. In Vibrio campbellii (strain ATCC BAA-1116), this protein is DNA ligase.